The sequence spans 482 residues: UDP-N-acetylmuramoyl-L-alanyl-D-glutamate--2,6-diaminopimelate ligase (482 aa).

Residue Ser24 participates in UDP-N-acetyl-alpha-D-muramoyl-L-alanyl-D-glutamate binding. An ATP-binding site is contributed by 105–111 (GTNGKTT). Residues 147 to 148 (TT), Ser174, Gln180, and Arg182 each bind UDP-N-acetyl-alpha-D-muramoyl-L-alanyl-D-glutamate. Lys214 is subject to N6-carboxylysine. Residues Arg378, 402–405 (DNPR), Gly453, and Glu457 each bind meso-2,6-diaminopimelate. The Meso-diaminopimelate recognition motif motif lies at 402 to 405 (DNPR).

The protein belongs to the MurCDEF family. MurE subfamily. The cofactor is Mg(2+). In terms of processing, carboxylation is probably crucial for Mg(2+) binding and, consequently, for the gamma-phosphate positioning of ATP.

Its subcellular location is the cytoplasm. The catalysed reaction is UDP-N-acetyl-alpha-D-muramoyl-L-alanyl-D-glutamate + meso-2,6-diaminopimelate + ATP = UDP-N-acetyl-alpha-D-muramoyl-L-alanyl-gamma-D-glutamyl-meso-2,6-diaminopimelate + ADP + phosphate + H(+). It functions in the pathway cell wall biogenesis; peptidoglycan biosynthesis. Its function is as follows. Catalyzes the addition of meso-diaminopimelic acid to the nucleotide precursor UDP-N-acetylmuramoyl-L-alanyl-D-glutamate (UMAG) in the biosynthesis of bacterial cell-wall peptidoglycan. The polypeptide is UDP-N-acetylmuramoyl-L-alanyl-D-glutamate--2,6-diaminopimelate ligase (Lawsonia intracellularis (strain PHE/MN1-00)).